The primary structure comprises 462 residues: Kinetochore protein Nuf2-A (462 aa).

2 coiled-coil regions span residues 143 to 277 (SSYK…DKCD) and 308 to 461 (EIHR…RLSR). The disordered stretch occupies residues 239–259 (RMKSQIVESPEQRKSKTERMK). Over residues 248-259 (PEQRKSKTERMK) the composition is skewed to basic and acidic residues.

Belongs to the NUF2 family. As to quaternary structure, component of the NDC80 complex, which is composed of ndc80, cdca1, spbc24 and spbc25. The NDC80 complex interacts with mis12 and zwint.

The protein localises to the nucleus. Its subcellular location is the chromosome. The protein resides in the centromere. It localises to the kinetochore. Its function is as follows. Acts as a component of the essential kinetochore-associated NDC80 complex, which is required for chromosome segregation and spindle checkpoint activity. Required for kinetochore integrity and the organization of stable microtubule binding sites in the outer plate of the kinetochore. The NDC80 complex synergistically enhances the affinity of the SKA1 complex for microtubules and may allow the NDC80 complex to track depolymerizing microtubules. This Xenopus laevis (African clawed frog) protein is Kinetochore protein Nuf2-A (nuf2-a).